A 275-amino-acid polypeptide reads, in one-letter code: Hydroxyethylthiazole kinase (275 aa).

Substrate is bound at residue Met-57. ATP-binding residues include Arg-132 and Ser-178. Gly-205 serves as a coordination point for substrate.

This sequence belongs to the Thz kinase family. Mg(2+) is required as a cofactor.

The catalysed reaction is 5-(2-hydroxyethyl)-4-methylthiazole + ATP = 4-methyl-5-(2-phosphooxyethyl)-thiazole + ADP + H(+). It functions in the pathway cofactor biosynthesis; thiamine diphosphate biosynthesis; 4-methyl-5-(2-phosphoethyl)-thiazole from 5-(2-hydroxyethyl)-4-methylthiazole: step 1/1. In terms of biological role, catalyzes the phosphorylation of the hydroxyl group of 4-methyl-5-beta-hydroxyethylthiazole (THZ). This is Hydroxyethylthiazole kinase from Clavibacter sepedonicus (Clavibacter michiganensis subsp. sepedonicus).